The sequence spans 294 residues: S-adenosylmethionine uptake transporter (294 aa).

The next 10 membrane-spanning stretches (helical) occupy residues A4 to I24, V41 to G61, V74 to L91, T98 to L118, N121 to L141, F148 to I168, M178 to M198, F207 to L227, A237 to F257, and F260 to I280. 2 EamA domains span residues S22–L141 and I160–I280.

This sequence belongs to the drug/metabolite transporter (DMT) superfamily. 10 TMS drug/metabolite exporter (DME) (TC 2.A.7.3) family.

The protein localises to the cell inner membrane. Transport is inhibited by S-adenosylethionine and to a lesser extent by S-adenosylhomocysteine. Unlike eukaryotic transporters is not inhibited by sinfungin. Also inhibited by 2.4-dinitrophenol, suggesting transport is an energy-dependent process. In terms of biological role, transports S-adenosylmethionine. The polypeptide is S-adenosylmethionine uptake transporter (sam) (Rickettsia prowazekii (strain Madrid E)).